The chain runs to 186 residues: Alkyl hydroperoxide reductase AhpD (186 aa).

Residue Cys132 is the Proton donor of the active site. A disulfide bond links Cys132 and Cys135. The active-site Cysteine sulfenic acid (-SOH) intermediate is the Cys135.

It belongs to the AhpD family.

The catalysed reaction is N(6)-[(R)-dihydrolipoyl]-L-lysyl-[lipoyl-carrier protein] + a hydroperoxide = N(6)-[(R)-lipoyl]-L-lysyl-[lipoyl-carrier protein] + an alcohol + H2O. Functionally, antioxidant protein with alkyl hydroperoxidase activity. Required for the reduction of the AhpC active site cysteine residues and for the regeneration of the AhpC enzyme activity. This Anaeromyxobacter dehalogenans (strain 2CP-C) protein is Alkyl hydroperoxide reductase AhpD.